A 35-amino-acid chain; its full sequence is Photosystem II reaction center protein T (35 aa).

A helical transmembrane segment spans residues 3–23 (ALVYTFLLVSTLGIIFFAIFF).

This sequence belongs to the PsbT family. In terms of assembly, PSII is composed of 1 copy each of membrane proteins PsbA, PsbB, PsbC, PsbD, PsbE, PsbF, PsbH, PsbI, PsbJ, PsbK, PsbL, PsbM, PsbT, PsbY, PsbZ, Psb30/Ycf12, at least 3 peripheral proteins of the oxygen-evolving complex and a large number of cofactors. It forms dimeric complexes.

The protein resides in the plastid. Its subcellular location is the chloroplast thylakoid membrane. In terms of biological role, found at the monomer-monomer interface of the photosystem II (PS II) dimer, plays a role in assembly and dimerization of PSII. PSII is a light-driven water plastoquinone oxidoreductase, using light energy to abstract electrons from H(2)O, generating a proton gradient subsequently used for ATP formation. This Pinus thunbergii (Japanese black pine) protein is Photosystem II reaction center protein T.